We begin with the raw amino-acid sequence, 63 residues long: Small ribosomal subunit protein eS17 (63 aa).

The protein belongs to the eukaryotic ribosomal protein eS17 family.

This is Small ribosomal subunit protein eS17 from Methanococcus vannielii (strain ATCC 35089 / DSM 1224 / JCM 13029 / OCM 148 / SB).